The following is a 159-amino-acid chain: S-ribosylhomocysteine lyase (159 aa).

Fe cation-binding residues include H53, H57, and C124.

This sequence belongs to the LuxS family. As to quaternary structure, homodimer. Fe cation is required as a cofactor.

The catalysed reaction is S-(5-deoxy-D-ribos-5-yl)-L-homocysteine = (S)-4,5-dihydroxypentane-2,3-dione + L-homocysteine. In terms of biological role, involved in the synthesis of autoinducer 2 (AI-2) which is secreted by bacteria and is used to communicate both the cell density and the metabolic potential of the environment. The regulation of gene expression in response to changes in cell density is called quorum sensing. Catalyzes the transformation of S-ribosylhomocysteine (RHC) to homocysteine (HC) and 4,5-dihydroxy-2,3-pentadione (DPD). This Porphyromonas gingivalis (strain ATCC BAA-308 / W83) protein is S-ribosylhomocysteine lyase.